The sequence spans 231 residues: MTEALDTRFTQFLLESQALKFGSFTLKSGRQSPYFINAGAFDDGAKIATLGEFYAEKIQQEIAASNLAARIDTVFGPAYKGIPLAVATTIAMQHRFNASIGYTFDRKEKKDHGDGGTMVGKPLEDGMNVLLVDDVMTAGTAVREVVPKLKAQADVNIVGLVLSVDRMEKTKDSDLSAVQDVQREFGFPVFAIANVKEIFAAGRQLIGEHGQPYVTDEIAKAAEEYLTQYGA.

5-phospho-alpha-D-ribose 1-diphosphate is bound by residues K27, 79–80 (YK), R106, K107, K110, H112, and 133–141 (DDVMTAGTA). Orotate is bound by residues T137 and R166.

This sequence belongs to the purine/pyrimidine phosphoribosyltransferase family. PyrE subfamily. As to quaternary structure, homodimer. Mg(2+) serves as cofactor.

The catalysed reaction is orotidine 5'-phosphate + diphosphate = orotate + 5-phospho-alpha-D-ribose 1-diphosphate. It functions in the pathway pyrimidine metabolism; UMP biosynthesis via de novo pathway; UMP from orotate: step 1/2. Catalyzes the transfer of a ribosyl phosphate group from 5-phosphoribose 1-diphosphate to orotate, leading to the formation of orotidine monophosphate (OMP). This chain is Orotate phosphoribosyltransferase, found in Bifidobacterium animalis subsp. lactis (strain AD011).